The chain runs to 358 residues: UDP-N-acetylglucosamine--N-acetylmuramyl-(pentapeptide) pyrophosphoryl-undecaprenol N-acetylglucosamine transferase (358 aa).

UDP-N-acetyl-alpha-D-glucosamine-binding positions include 11 to 13 (TGG), asparagine 124, arginine 164, serine 195, and glutamine 291.

Belongs to the glycosyltransferase 28 family. MurG subfamily.

It is found in the cell inner membrane. The enzyme catalyses di-trans,octa-cis-undecaprenyl diphospho-N-acetyl-alpha-D-muramoyl-L-alanyl-D-glutamyl-meso-2,6-diaminopimeloyl-D-alanyl-D-alanine + UDP-N-acetyl-alpha-D-glucosamine = di-trans,octa-cis-undecaprenyl diphospho-[N-acetyl-alpha-D-glucosaminyl-(1-&gt;4)]-N-acetyl-alpha-D-muramoyl-L-alanyl-D-glutamyl-meso-2,6-diaminopimeloyl-D-alanyl-D-alanine + UDP + H(+). The protein operates within cell wall biogenesis; peptidoglycan biosynthesis. Cell wall formation. Catalyzes the transfer of a GlcNAc subunit on undecaprenyl-pyrophosphoryl-MurNAc-pentapeptide (lipid intermediate I) to form undecaprenyl-pyrophosphoryl-MurNAc-(pentapeptide)GlcNAc (lipid intermediate II). In Leptospira interrogans serogroup Icterohaemorrhagiae serovar copenhageni (strain Fiocruz L1-130), this protein is UDP-N-acetylglucosamine--N-acetylmuramyl-(pentapeptide) pyrophosphoryl-undecaprenol N-acetylglucosamine transferase.